A 427-amino-acid polypeptide reads, in one-letter code: N-acylglucosamine 2-epimerase (427 aa).

Residues 195–216 (LLNLVEQLGEADEELAGKYAEL) are leucine-zipper.

Belongs to the N-acylglucosamine 2-epimerase family. As to quaternary structure, homodimer. Forms a heterodimer with renin and inhibits its activity.

It carries out the reaction an N-acyl-D-glucosamine = an N-acyl-D-mannosamine. Its pathway is amino-sugar metabolism; N-acetylneuraminate degradation. Inhibited by N-ethylmaleimide, 5,5'-dithiobis-2-nitrobenzoate and iodoacetic acid. In terms of biological role, catalyzes the interconversion of N-acetylglucosamine to N-acetylmannosamine. Involved in the N-glycolylneuraminic acid (Neu5Gc) degradation pathway: although human is not able to catalyze formation of Neu5Gc due to the inactive CMAHP enzyme, Neu5Gc is present in food and must be degraded. This Homo sapiens (Human) protein is N-acylglucosamine 2-epimerase (RENBP).